Consider the following 446-residue polypeptide: N-succinylarginine dihydrolase (446 aa).

Residues alanine 19–serine 28, asparagine 110, and histidine 137–arginine 138 contribute to the substrate site. Residue glutamate 174 is part of the active site. Arginine 213 is a binding site for substrate. Histidine 249 is an active-site residue. Aspartate 251 and asparagine 364 together coordinate substrate. Catalysis depends on cysteine 370, which acts as the Nucleophile.

The protein belongs to the succinylarginine dihydrolase family. As to quaternary structure, homodimer.

It catalyses the reaction N(2)-succinyl-L-arginine + 2 H2O + 2 H(+) = N(2)-succinyl-L-ornithine + 2 NH4(+) + CO2. Its pathway is amino-acid degradation; L-arginine degradation via AST pathway; L-glutamate and succinate from L-arginine: step 2/5. In terms of biological role, catalyzes the hydrolysis of N(2)-succinylarginine into N(2)-succinylornithine, ammonia and CO(2). This chain is N-succinylarginine dihydrolase, found in Burkholderia pseudomallei (strain 668).